Consider the following 563-residue polypeptide: Solute carrier family 22 member 1 (563 aa).

The Cytoplasmic segment spans residues 1–21 (MLTVDDVLEQVGEFGWFQKQT). Residues 22–42 (FLILCLLSAAFAPIYVGIVFL) traverse the membrane as a helical segment. The Extracellular segment spans residues 43 to 144 (AFTPDHRCRS…LVCDDSWKVD (102 aa)). Residue Asn-71 is glycosylated (N-linked (GlcNAc...) asparagine). Residues 145 to 165 (LFQSCVNLGFFLGSLGVGYIA) form a helical membrane-spanning segment. At 166 to 171 (DRFGRK) the chain is on the cytoplasmic side. The chain crosses the membrane as a helical span at residues 172-192 (VCLLATTLTCASLGVLTAVAP). Residues 193–196 (DYTS) are Extracellular-facing. The chain crosses the membrane as a helical span at residues 197 to 219 (LLIFRLLQGLVSKGSWTAGYTLI). The Cytoplasmic portion of the chain corresponds to 220 to 232 (TEFVGLGYRRTVA). The chain crosses the membrane as a helical span at residues 233–253 (ILYQMAFTVGLVLLSGLAYIL). The Extracellular portion of the chain corresponds to 254–257 (PHWR). Residues 258–278 (WLQLAVSLPIFLLLFRFWFVP) form a helical membrane-spanning segment. Residues 278–282 (PESPR) carry the Proline-rich sequence motif. Over 279–342 (ESPRWLLSQK…FRTPNLRKYT (64 aa)) the chain is Cytoplasmic. Position 328 is a phosphoserine (Ser-328). Residues 343–363 (FILMYLWFTSSVVYQGLIMHV) form a helical membrane-spanning segment. Over 364-371 (GATGGNLY) the chain is Extracellular. Residues 372-392 (LDFLYSALVEFPAGFIILVTI) traverse the membrane as a helical segment. The Cytoplasmic segment spans residues 393-398 (DRFGRR). Residues 399 to 418 (YPLATSNLAAGLACFLMIFI) traverse the membrane as a helical segment. Residues 419–423 (PHDLP) lie on the Extracellular side of the membrane. Residues 424–446 (WLNIMVACVGRMGITIVFQMVCL) form a helical membrane-spanning segment. Over 447-459 (VNAELFPTFIRNL) the chain is Cytoplasmic. The helical transmembrane segment at 460 to 480 (GMMVCSSLCDLGGVLTPFLVF) threads the bilayer. At 481-487 (RLMEVWQ) the chain is on the extracellular side. Residues 488 to 508 (GSPLILFAALGLVAGGMTLLL) traverse the membrane as a helical segment. Topologically, residues 509 to 563 (PETKGVTLPETIEDAENLQRKAKPKENKIYLQVQTSELNTQAAERDASQGTAQQK) are cytoplasmic.

This sequence belongs to the major facilitator (TC 2.A.1) superfamily. Organic cation transporter (TC 2.A.1.19) family. Post-translationally, phosphorylated.

It is found in the basolateral cell membrane. Its subcellular location is the apical cell membrane. The protein resides in the lateral cell membrane. It localises to the basal cell membrane. The protein localises to the cell membrane. The enzyme catalyses 1-methylnicotinamide(out) = 1-methylnicotinamide(in). It carries out the reaction dopamine(out) = dopamine(in). The catalysed reaction is serotonin(out) = serotonin(in). It catalyses the reaction (R)-adrenaline(out) = (R)-adrenaline(in). The enzyme catalyses (R)-noradrenaline(out) = (R)-noradrenaline(in). It carries out the reaction histamine(out) = histamine(in). The catalysed reaction is guanidine(out) = guanidine(in). It catalyses the reaction choline(out) = choline(in). The enzyme catalyses acetylcholine(in) = acetylcholine(out). It carries out the reaction thiamine(in) = thiamine(out). The catalysed reaction is spermidine(in) = spermidine(out). It catalyses the reaction agmatine(out) = agmatine(in). The enzyme catalyses putrescine(out) = putrescine(in). It carries out the reaction (R)-carnitine(in) = (R)-carnitine(out). The catalysed reaction is O-isobutanoyl-(R)-carnitine(in) = O-isobutanoyl-(R)-carnitine(out). It catalyses the reaction O-acetyl-(R)-carnitine(in) = O-acetyl-(R)-carnitine(out). The enzyme catalyses O-3-hydroxybutanoyl-(R)-carnitine(in) = O-3-hydroxybutanoyl-(R)-carnitine(out). It carries out the reaction O-propanoyl-(R)-carnitine(in) = O-propanoyl-(R)-carnitine(out). The catalysed reaction is O-butanoyl-(R)-carnitine(in) = O-butanoyl-(R)-carnitine(out). It catalyses the reaction O-2-methylbutanoyl-(R)-carnitine(in) = O-2-methylbutanoyl-(R)-carnitine(out). The enzyme catalyses O-3-methylbutanoyl-(R)-carnitine(in) = O-3-methylbutanoyl-(R)-carnitine(out). It carries out the reaction O-hexanoyl-(R)-carnitine(in) = O-hexanoyl-(R)-carnitine(out). The catalysed reaction is L-histidyl-L-proline diketopiperazine(in) = L-histidyl-L-proline diketopiperazine(out). It catalyses the reaction (R)-salsolinol(in) = (R)-salsolinol(out). The enzyme catalyses prostaglandin F2alpha(out) = prostaglandin F2alpha(in). It carries out the reaction prostaglandin E2(out) = prostaglandin E2(in). Its activity is regulated as follows. Phosphorylation of the transporter leads to changes in its substrate affinity, resulting in a regulation of the transport activity. In contrast with rat ortholog, ASP uptake is inhibited by protein kinase A (PKA) and C (PKC) activation. ASP uptake is also endogenously activated by calmodulin, the calmodulin-dependent kinase II and LCK tyrosine kinase. Inhibited by cGMP, most likely through a cGMP-binding protein that interacts with OCT1. In terms of biological role, electrogenic voltage-dependent transporter that mediates the transport of a variety of organic cations such as endogenous bioactive amines, cationic drugs and xenobiotics. Functions as a pH- and Na(+)-independent, bidirectional transporter. Cation cellular uptake or release is driven by the electrochemical potential (i.e. membrane potential and concentration gradient) and substrate selectivity. Hydrophobicity is a major requirement for recognition in polyvalent substrates and inhibitors. Primarily expressed in the basolateral membrane of hepatocytes and proximal tubules and involved in the uptake and disposition of cationic compounds from the blood by hepatic and renal clearance. Most likely functions as an uptake carrier in enterocytes contributing to the intestinal elimination of organic cations from the systemic circulation. Transports endogenous monoamines such as N-1-methylnicotinamide (NMN), guanidine, neurotransmitters dopamine, serotonin, noradrenaline, adrenaline and histamine, and quaternary ammonium compound such as choline. Also transports natural polyamines such as spermidine, agmatine and putrescine at low affinity, but relatively high turnover. Involved in the hepatic and intestinal uptake of the vitamin B1/thiamine, hence regulating hepatic lipid and energy metabolism. Contributes to the influx and efflux of fatty acid carriers carnitines and acylcarnitines across the basolateral membrane of hepatocytes, from the liver to the systemic circulation and inversely and may be involved in regulating the systemic availability of hepatic acylcarnitines. Also capable of transporting non-amine endogenous compounds such as prostaglandin E2 (PGE2) and prostaglandin F2-alpha (PGF2-alpha). May contribute to the transport of cationic compounds in testes across the blood-testis-barrier. Also mediates the uptake of xenobiotics tributylmethylammonium (TBuMA), quinidine, N-methyl-quinine (NMQ), N-methyl-quinidine (NMQD) N-(4,4-azo-n-pentyl)-quinuclidine (APQ), azidoprocainamide methoiodide (AMP), N-(4,4-azo-n-pentyl)-21-deoxyajmalinium (APDA) and 4-(4-(dimethylamino)styryl)-N-methylpyridinium (ASP). The sequence is that of Solute carrier family 22 member 1 (SLC22A1) from Bos taurus (Bovine).